Here is a 236-residue protein sequence, read N- to C-terminus: Leucyl/phenylalanyl-tRNA--protein transferase (236 aa).

Belongs to the L/F-transferase family.

Its subcellular location is the cytoplasm. The catalysed reaction is N-terminal L-lysyl-[protein] + L-leucyl-tRNA(Leu) = N-terminal L-leucyl-L-lysyl-[protein] + tRNA(Leu) + H(+). It carries out the reaction N-terminal L-arginyl-[protein] + L-leucyl-tRNA(Leu) = N-terminal L-leucyl-L-arginyl-[protein] + tRNA(Leu) + H(+). It catalyses the reaction L-phenylalanyl-tRNA(Phe) + an N-terminal L-alpha-aminoacyl-[protein] = an N-terminal L-phenylalanyl-L-alpha-aminoacyl-[protein] + tRNA(Phe). Functions in the N-end rule pathway of protein degradation where it conjugates Leu, Phe and, less efficiently, Met from aminoacyl-tRNAs to the N-termini of proteins containing an N-terminal arginine or lysine. This is Leucyl/phenylalanyl-tRNA--protein transferase from Aliivibrio salmonicida (strain LFI1238) (Vibrio salmonicida (strain LFI1238)).